A 150-amino-acid chain; its full sequence is MADNEILQMHDLKPAPGAKKDRTRVGRGEGSKGKTSGRGAKGQTKRNHVRPGFEGGQLPLYMRLPKLRGFKNPFKVEFQVINIARLVELFPEGGEVAVADLIAKGAVRDNAPVKVLGDGETTVAFTLKGVKASASAKSKIEAAGGSVSED.

The disordered stretch occupies residues 1–55 (MADNEILQMHDLKPAPGAKKDRTRVGRGEGSKGKTSGRGAKGQTKRNHVRPGFEG). Residues 8 to 32 (QMHDLKPAPGAKKDRTRVGRGEGSK) show a composition bias toward basic and acidic residues.

This sequence belongs to the universal ribosomal protein uL15 family. Part of the 50S ribosomal subunit.

Functionally, binds to the 23S rRNA. In Bifidobacterium longum (strain NCC 2705), this protein is Large ribosomal subunit protein uL15.